Reading from the N-terminus, the 420-residue chain is D-tagatose-1,6-bisphosphate aldolase subunit GatZ (420 aa).

This sequence belongs to the GatZ/KbaZ family. GatZ subfamily. Forms a complex with GatY.

The protein operates within carbohydrate metabolism; D-tagatose 6-phosphate degradation; D-glyceraldehyde 3-phosphate and glycerone phosphate from D-tagatose 6-phosphate: step 2/2. Functionally, component of the tagatose-1,6-bisphosphate aldolase GatYZ that is required for full activity and stability of the Y subunit. Could have a chaperone-like function for the proper and stable folding of GatY. When expressed alone, GatZ does not show any aldolase activity. Is involved in the catabolism of galactitol. This Escherichia coli O6:K15:H31 (strain 536 / UPEC) protein is D-tagatose-1,6-bisphosphate aldolase subunit GatZ.